The sequence spans 76 residues: Omega-conotoxin-like TxO1 (76 aa).

Residues 1 to 22 (MKLTCVVIVAVLFLTVWTFATA) form the signal peptide. Positions 23-50 (DDSGNGLEKLFSNAHHEMKNPEASKLNE) are excised as a propeptide. 3 cysteine pairs are disulfide-bonded: Cys-52-Cys-67, Cys-59-Cys-70, and Cys-66-Cys-75.

It belongs to the conotoxin O1 superfamily. Expressed by the venom duct.

The protein localises to the secreted. Omega-conotoxins act at presynaptic membranes, they bind and block voltage-gated calcium channels (Cav). The sequence is that of Omega-conotoxin-like TxO1 from Conus textile (Cloth-of-gold cone).